Here is a 278-residue protein sequence, read N- to C-terminus: Release factor glutamine methyltransferase (278 aa).

Residues 117 to 121 (GTGSG), D140, and N184 each bind S-adenosyl-L-methionine. 184–187 (NPPY) is a binding site for substrate.

This sequence belongs to the protein N5-glutamine methyltransferase family. PrmC subfamily.

It catalyses the reaction L-glutaminyl-[peptide chain release factor] + S-adenosyl-L-methionine = N(5)-methyl-L-glutaminyl-[peptide chain release factor] + S-adenosyl-L-homocysteine + H(+). Methylates the class 1 translation termination release factors RF1/PrfA and RF2/PrfB on the glutamine residue of the universally conserved GGQ motif. The sequence is that of Release factor glutamine methyltransferase from Staphylococcus aureus (strain NCTC 8325 / PS 47).